A 359-amino-acid polypeptide reads, in one-letter code: Phosphatidylglycerol--prolipoprotein diacylglyceryl transferase (359 aa).

4 helical membrane-spanning segments follow: residues 24–44 (VALR…IVWG), 58–78 (VLDI…LYHV), 98–118 (VWQG…GAWI), and 124–144 (GIPL…AQAI). Arg146 lines the a 1,2-diacyl-sn-glycero-3-phospho-(1'-sn-glycerol) pocket. 3 consecutive transmembrane segments (helical) span residues 193-213 (FVVH…VLLL), 222-243 (IGHG…FWIE), and 258-278 (VNSF…FAAT). The tract at residues 284–359 (PAELRPADGG…IDSKKDDAND (76 aa)) is disordered. Residues 306-323 (IAQKEPEKNVEDAGKDEG) show a composition bias toward basic and acidic residues. Residues 336-349 (ASTASTGGEAGTKT) are compositionally biased toward low complexity. Basic and acidic residues predominate over residues 350–359 (IDSKKDDAND).

It belongs to the Lgt family.

The protein localises to the cell membrane. It catalyses the reaction L-cysteinyl-[prolipoprotein] + a 1,2-diacyl-sn-glycero-3-phospho-(1'-sn-glycerol) = an S-1,2-diacyl-sn-glyceryl-L-cysteinyl-[prolipoprotein] + sn-glycerol 1-phosphate + H(+). It functions in the pathway protein modification; lipoprotein biosynthesis (diacylglyceryl transfer). Functionally, catalyzes the transfer of the diacylglyceryl group from phosphatidylglycerol to the sulfhydryl group of the N-terminal cysteine of a prolipoprotein, the first step in the formation of mature lipoproteins. This Rhodococcus jostii (strain RHA1) protein is Phosphatidylglycerol--prolipoprotein diacylglyceryl transferase.